Reading from the N-terminus, the 264-residue chain is Thymidylate synthase (264 aa).

Residues Arg-21 and Arg-126 to Arg-127 contribute to the dUMP site. Catalysis depends on Cys-146, which acts as the Nucleophile. Residues Arg-166–Asp-169, Asn-177, and His-207–Tyr-209 contribute to the dUMP site. A (6R)-5,10-methylene-5,6,7,8-tetrahydrofolate-binding site is contributed by Asp-169. Ala-263 is a binding site for (6R)-5,10-methylene-5,6,7,8-tetrahydrofolate.

The protein belongs to the thymidylate synthase family. Bacterial-type ThyA subfamily. As to quaternary structure, homodimer.

It localises to the cytoplasm. The catalysed reaction is dUMP + (6R)-5,10-methylene-5,6,7,8-tetrahydrofolate = 7,8-dihydrofolate + dTMP. Its pathway is pyrimidine metabolism; dTTP biosynthesis. Its function is as follows. Catalyzes the reductive methylation of 2'-deoxyuridine-5'-monophosphate (dUMP) to 2'-deoxythymidine-5'-monophosphate (dTMP) while utilizing 5,10-methylenetetrahydrofolate (mTHF) as the methyl donor and reductant in the reaction, yielding dihydrofolate (DHF) as a by-product. This enzymatic reaction provides an intracellular de novo source of dTMP, an essential precursor for DNA biosynthesis. The sequence is that of Thymidylate synthase from Bradyrhizobium sp. (strain BTAi1 / ATCC BAA-1182).